Consider the following 107-residue polypeptide: Large ribosomal subunit protein uL24 (107 aa).

This sequence belongs to the universal ribosomal protein uL24 family. In terms of assembly, part of the 50S ribosomal subunit.

Functionally, one of two assembly initiator proteins, it binds directly to the 5'-end of the 23S rRNA, where it nucleates assembly of the 50S subunit. Its function is as follows. One of the proteins that surrounds the polypeptide exit tunnel on the outside of the subunit. The chain is Large ribosomal subunit protein uL24 from Neisseria meningitidis serogroup C (strain 053442).